Reading from the N-terminus, the 563-residue chain is Beta-catenin-like protein 1 (563 aa).

The residue at position 1 (Met-1) is an N-acetylmethionine. The interval 1–81 is disordered; sequence MDVGELLSYQ…EEEEPLDESS (81 aa). The Nuclear localization signal signature appears at 16-33; that stretch reads KRPRDDEEEELKTRRKQT. Over residues 34–45 the composition is skewed to basic and acidic residues; the sequence is GPRERGRYREDE. Over residues 66–78 the composition is skewed to acidic residues; sequence DGEEEEEEEEPLD. HEAT repeat units follow at residues 79 to 129 and 134 to 176; these read ESSV…VVAT and YHLL…TLHE. At Lys-91 the chain carries N6-acetyllysine. The Nuclear export signal (NES) signature appears at 130-140; sequence MPDLYHLLVEL. ARM repeat units lie at residues 178-228, 229-273, 274-323, 325-363, and 364-417; these read EEGA…MAEF, RPEM…LQDN, DENR…CLML, SNRE…AMIG, and PEGA…LLRN. Ser-389 bears the Phosphoserine mark. Residues 476 to 540 are a coiled coil; sequence DMEDEFYLRR…HIIKEYAENI (65 aa). At Ser-545 the chain carries Phosphoserine.

As to quaternary structure, component of the PRP19-CDC5L splicing complex composed of a core complex comprising a homotetramer of PRPF19, CDC5L, PLRG1 and BCAS2, and at least three less stably associated proteins CTNNBL1, CWC15 and HSPA8. Interacts directly with CWC15 and CDC5L in the complex. Interacts with AICDA; the interaction is important for the antibody diversification activity of AICDA. Interacts with PRPF31 (via its NLS). Interacts (via its N-terminal NLS) with KPNA1 and KPNA2.

The protein localises to the nucleus. Functionally, component of the PRP19-CDC5L complex that forms an integral part of the spliceosome and is required for activating pre-mRNA splicing. Participates in AID/AICDA-mediated somatic hypermutation (SHM) and class-switch recombination (CSR), 2 processes resulting in the production of high-affinity, mutated isotype-switched antibodies. This is Beta-catenin-like protein 1 (Ctnnbl1) from Rattus norvegicus (Rat).